The sequence spans 494 residues: Alpha-amylase-related protein (494 aa).

Positions 1–20 (MIKFALALTLCLAGASLSLA) are cleaved as a signal peptide. Residue Q21 is modified to Pyrrolidone carboxylic acid. The cysteines at positions 48 and 104 are disulfide-linked. Ca(2+) contacts are provided by N118, Q169, and D178. A disulfide bridge connects residues C157 and C171. R206 provides a ligand contact to chloride. D208 functions as the Nucleophile in the catalytic mechanism. H212 provides a ligand contact to Ca(2+). E245 serves as the catalytic Proton donor. 2 residues coordinate chloride: N308 and R343. 3 cysteine pairs are disulfide-bonded: C376-C382, C418-C441, and C448-C460.

It belongs to the glycosyl hydrolase 13 family. As to quaternary structure, monomer. Requires Ca(2+) as cofactor. Chloride is required as a cofactor.

Its subcellular location is the secreted. It catalyses the reaction Endohydrolysis of (1-&gt;4)-alpha-D-glucosidic linkages in polysaccharides containing three or more (1-&gt;4)-alpha-linked D-glucose units.. This is Alpha-amylase-related protein (Amyrel) from Drosophila lini (Fruit fly).